The chain runs to 63 residues: Large ribosomal subunit protein uL29 (63 aa).

The protein belongs to the universal ribosomal protein uL29 family.

This is Large ribosomal subunit protein uL29 from Pelagibacter ubique (strain HTCC1062).